The chain runs to 707 residues: Acyl-CoA ligase 891, peroxisomal (707 aa).

Position 259-270 (259-270 (INYTSGTTGPPK)) interacts with ATP. The segment at 525-549 (DGWFRTGDVCTIDEKGRFIIIDRRK) is fatty acid-binding. Positions 705–707 (AKL) match the Peroxisome targeting signal motif.

This sequence belongs to the ATP-dependent AMP-binding enzyme family.

It is found in the peroxisome matrix. It catalyses the reaction (4E,8E)-10-(4-hydroxy-6-methoxy-7-methyl-3-oxo-1,3-dihydro-2-benzofuran-5-yl)-4,8-dimethyldeca-4,8-dienoate + ATP + CoA = (4E,8E)-10-(4-hydroxy-6-methoxy-7-methyl-3-oxo-1,3-dihydro-2-benzofuran-5-yl)-4,8-dimethyldeca-4,8-dienoyl-CoA + AMP + diphosphate. Its pathway is secondary metabolite biosynthesis; terpenoid biosynthesis. In terms of biological role, acyl-CoA ligase involved in the biosynthesis of mycophenolic acid (MPA), the first isolated antibiotic natural product in the world obtained from a culture of Penicillium brevicompactum in 1893. The peroxisomal acyl-CoA ligase 891 converts the intermediate MFDHMP-3C into MFDHMP-3C-CoA which impairs its diffusion from the peroxisome. The first step of the pathway is the synthesis of 5-methylorsellinic acid (5MOA) by the cytosolic polyketide synthase mpaC. 5MOA is then converted to the phthalide compound 5,7-dihydroxy-4,6-dimethylphthalide (DHMP) by the endoplasmic reticulum-bound cytochrome P450 monooxygenase mpaDE. MpaDE first catalyzes hydroxylation of 5-MOA to 4,6-dihydroxy-2-(hydroxymethyl)-3-methylbenzoic acid (DHMB). MpaDE then acts as a lactone synthase that catalyzes the ring closure to convert DHMB into DHMP. The next step is the prenylation of DHMP by the Golgi apparatus-associated prenyltransferase mpaA to yield farnesyl-DHMP (FDHMP). The ER-bound oxygenase mpaB then mediates the oxidative cleavage the C19-C20 double bond in FDHMP to yield FDHMP-3C via a mycophenolic aldehyde intermediate. The O-methyltransferase mpaG catalyzes the methylation of FDHMP-3C to yield MFDHMP-3C. After the cytosolic methylation of FDHMP-3C, MFDHMP-3C enters into peroxisomes probably via free diffusion due to its low molecular weight. Upon a peroxisomal CoA ligation reaction, catalyzed by a beta-oxidation component enzyme acyl-CoA ligase ACL891, MFDHMP-3C-CoA would then be restricted to peroxisomes for the following beta-oxidation pathway steps. The peroxisomal beta-oxidation machinery than converts MFDHMP-3C-CoA into MPA_CoA, via a beta-oxidation chain-shortening process. Finally mpaH acts as a peroxisomal acyl-CoA hydrolase with high substrate specificity toward MPA-CoA to release the final product MPA. The sequence is that of Acyl-CoA ligase 891, peroxisomal from Penicillium roqueforti (strain FM164).